The primary structure comprises 156 residues: Small ribosomal subunit protein uS7 (156 aa).

Belongs to the universal ribosomal protein uS7 family. In terms of assembly, part of the 30S ribosomal subunit. Contacts proteins S9 and S11.

Its function is as follows. One of the primary rRNA binding proteins, it binds directly to 16S rRNA where it nucleates assembly of the head domain of the 30S subunit. Is located at the subunit interface close to the decoding center, probably blocks exit of the E-site tRNA. This is Small ribosomal subunit protein uS7 from Dehalococcoides mccartyi (strain ATCC BAA-2266 / KCTC 15142 / 195) (Dehalococcoides ethenogenes (strain 195)).